A 131-amino-acid chain; its full sequence is Nitrogenase-stabilizing/protective protein NifW (131 aa).

The protein belongs to the NifW family. In terms of assembly, homotrimer; associates with NifD.

Its function is as follows. May protect the nitrogenase Fe-Mo protein from oxidative damage. The sequence is that of Nitrogenase-stabilizing/protective protein NifW from Frankia alni (strain DSM 45986 / CECT 9034 / ACN14a).